The sequence spans 517 residues: Ribose import ATP-binding protein RbsA 1 (517 aa).

ABC transporter domains follow at residues 11–251 (LEMR…VGRD) and 263–507 (YDPG…ALAT). 43-50 (GENGAGKS) provides a ligand contact to ATP.

The protein belongs to the ABC transporter superfamily. Ribose importer (TC 3.A.1.2.1) family. In terms of assembly, the complex is composed of an ATP-binding protein (RbsA), two transmembrane proteins (RbsC) and a solute-binding protein (RbsB).

The protein resides in the cell inner membrane. The catalysed reaction is D-ribose(out) + ATP + H2O = D-ribose(in) + ADP + phosphate + H(+). Functionally, part of the ABC transporter complex RbsABC involved in ribose import. Responsible for energy coupling to the transport system. The protein is Ribose import ATP-binding protein RbsA 1 of Burkholderia ambifaria (strain ATCC BAA-244 / DSM 16087 / CCUG 44356 / LMG 19182 / AMMD) (Burkholderia cepacia (strain AMMD)).